The chain runs to 248 residues: NADP-dependent 3-hydroxy acid dehydrogenase YdfG (248 aa).

Residues 7 to 12 (GATAGF), 32 to 33 (RR), 54 to 55 (DV), and Asn-81 each bind NADP(+). Ser-134 contributes to the substrate binding site. Residues Tyr-147, Lys-151, and 177 to 185 (PGLVGGTEF) each bind NADP(+). Tyr-147 functions as the Proton acceptor in the catalytic mechanism.

The protein belongs to the short-chain dehydrogenases/reductases (SDR) family. Homotetramer.

It catalyses the reaction 3-hydroxypropanoate + NADP(+) = 3-oxopropanoate + NADPH + H(+). It carries out the reaction L-allo-threonine + NADP(+) = aminoacetone + CO2 + NADPH. Its function is as follows. NADP-dependent dehydrogenase with broad substrate specificity acting on 3-hydroxy acids. Catalyzes the NADP-dependent oxidation of L-allo-threonine to L-2-amino-3-keto-butyrate, which is spontaneously decarboxylated into aminoacetone. Also acts on D-threonine, L-serine, D-serine, D-3-hydroxyisobutyrate, L-3-hydroxyisobutyrate, D-glycerate and L-glycerate. Able to catalyze the reduction of the malonic semialdehyde to 3-hydroxypropionic acid. YdfG is apparently supplementing RutE, the presumed malonic semialdehyde reductase involved in pyrimidine degradation since both are able to detoxify malonic semialdehyde. This is NADP-dependent 3-hydroxy acid dehydrogenase YdfG from Shigella flexneri.